The primary structure comprises 152 residues: Erythema protein SVEP (152 aa).

The signal sequence occupies residues 1 to 18; the sequence is MSITQSFFVLTLAIFGAA.

In terms of tissue distribution, salivary gland (at protein level).

The protein resides in the secreted. In terms of biological role, salivary vasoactive peptide; induces vasodilatation in bioassay with rabbit aortic rings. In Simulium vittatum (Striped black fly), this protein is Erythema protein SVEP.